We begin with the raw amino-acid sequence, 477 residues long: Aspartyl/glutamyl-tRNA(Asn/Gln) amidotransferase subunit B (477 aa).

Belongs to the GatB/GatE family. GatB subfamily. As to quaternary structure, heterotrimer of A, B and C subunits.

It catalyses the reaction L-glutamyl-tRNA(Gln) + L-glutamine + ATP + H2O = L-glutaminyl-tRNA(Gln) + L-glutamate + ADP + phosphate + H(+). It carries out the reaction L-aspartyl-tRNA(Asn) + L-glutamine + ATP + H2O = L-asparaginyl-tRNA(Asn) + L-glutamate + ADP + phosphate + 2 H(+). Its function is as follows. Allows the formation of correctly charged Asn-tRNA(Asn) or Gln-tRNA(Gln) through the transamidation of misacylated Asp-tRNA(Asn) or Glu-tRNA(Gln) in organisms which lack either or both of asparaginyl-tRNA or glutaminyl-tRNA synthetases. The reaction takes place in the presence of glutamine and ATP through an activated phospho-Asp-tRNA(Asn) or phospho-Glu-tRNA(Gln). This is Aspartyl/glutamyl-tRNA(Asn/Gln) amidotransferase subunit B from Lawsonia intracellularis (strain PHE/MN1-00).